The primary structure comprises 76 residues: Protein OPG128 (76 aa).

Cysteines 17 and 21 form a disulfide.

The protein belongs to the orthopoxvirus OPG128 family. As to quaternary structure, interacts with sulfhydryl oxidase OPG072; this interaction involves formation of a transient disulfide-bonded intermediate, allowing disulfide bond transfer. Interacts with OPG088; this interaction involves formation of a transient disulfide-bonded intermediate, allowing disulfide bond transfer.

In terms of biological role, late protein which probably participates in disulfide bond formation by functioning as a thiol-disulfide transfer protein between membrane-associated OPG072 and OPG08. The complete pathway for formation of disulfide bonds in intracellular virion membrane proteins sequentially involves oxidation of OPG072, OPG128 and OPG08. This Variola virus (isolate Human/India/Ind3/1967) (VARV) protein is Protein OPG128 (OPG128).